Reading from the N-terminus, the 209-residue chain is Large ribosomal subunit protein uL3 (209 aa).

Residues 141–163 form a disordered region; it reads RAVGSMGASSDPSRTFKNKRMPG.

Belongs to the universal ribosomal protein uL3 family. As to quaternary structure, part of the 50S ribosomal subunit. Forms a cluster with proteins L14 and L19.

Functionally, one of the primary rRNA binding proteins, it binds directly near the 3'-end of the 23S rRNA, where it nucleates assembly of the 50S subunit. The polypeptide is Large ribosomal subunit protein uL3 (Clostridium botulinum (strain ATCC 19397 / Type A)).